We begin with the raw amino-acid sequence, 493 residues long: MTCGFNSIGCGFRPGNFSCVSACGPRPSRCCITAAPYRGISCYRGLTGGFGSHSVCGGFRAGSCGRSFGYRSGGVCGPSPPCITTVSVNESLLTPLNLEIDPNAQCVKQEEKEQIKSLNSRFAAFIDKVRFLEQQNKLLETKLQFYQNRECCQSNLEPLFAGYIETLRREAECVEADSGRLASELNHVQEVLEGYKKKYEEEVALRATAENEFVALKKDVDCAYLRKSDLEANVEALIQEIDFLRRLYEEEIRILQSHISDTSVVVKLDNSRDLNMDCIVAEIKAQYDDIATRSRAEAESWYRSKCEEMKATVIRHGETLRRTKEEINELNRMIQRLTAEVENAKCQNSKLEAAVAQSEQQGEAALSDARCKLAELEGALQKAKQDMACLIREYQEVMNSKLGLDIEIATYRRLLEGEEQRLCEGVEAVNVCVSSSRGGVVCGDLCVSGSRPVTGSVCSAPCNGNLVVSTGLCKPCGQLNTTCGGGSCGQGRH.

The head stretch occupies residues 1–111; sequence MTCGFNSIGC…PNAQCVKQEE (111 aa). In terms of domain architecture, IF rod spans 111–422; the sequence is EKEQIKSLNS…RLLEGEEQRL (312 aa). Residues 112 to 146 form a coil 1A region; that stretch reads KEQIKSLNSRFAAFIDKVRFLEQQNKLLETKLQFY. Residues 147–156 are linker 1; that stretch reads QNRECCQSNL. The coil 1B stretch occupies residues 157 to 257; it reads EPLFAGYIET…YEEEIRILQS (101 aa). Residue Lys217 forms a Glycyl lysine isopeptide (Lys-Gly) (interchain with G-Cter in SUMO1) linkage. Residues 258 to 274 are linker 12; it reads HISDTSVVVKLDNSRDL. A coil 2 region spans residues 275–418; that stretch reads NMDCIVAEIK…ATYRRLLEGE (144 aa). The segment at 419 to 493 is tail; sequence EQRLCEGVEA…GGGSCGQGRH (75 aa).

Belongs to the intermediate filament family. Heterotetramer of two type I and two type II keratins. As to expression, synthesis begins in the cortex 10-15 cell layers above the apex of the dermal papilla and ends abruptly in the middle of the cortex.

The polypeptide is Keratin, type II cuticular Hb3 (KRT83) (Homo sapiens (Human)).